A 207-amino-acid chain; its full sequence is Guanylate kinase (207 aa).

A Guanylate kinase-like domain is found at glycine 5 to arginine 184. Alanine 12–serine 19 contacts ATP. A disordered region spans residues proline 30–valine 49.

This sequence belongs to the guanylate kinase family.

The protein resides in the cytoplasm. It carries out the reaction GMP + ATP = GDP + ADP. Its function is as follows. Essential for recycling GMP and indirectly, cGMP. The sequence is that of Guanylate kinase from Shewanella frigidimarina (strain NCIMB 400).